The sequence spans 659 residues: Exoribonuclease 2 (659 aa).

One can recognise an RNB domain in the interval 189–531 (RENLTALHFV…NHRLIKAVLA (343 aa)). An S1 motif domain is found at 576-658 (NVEFNAEVQD…ATRSIVGEIL (83 aa)).

It belongs to the RNR ribonuclease family. RNase II subfamily.

It localises to the cytoplasm. It carries out the reaction Exonucleolytic cleavage in the 3'- to 5'-direction to yield nucleoside 5'-phosphates.. In terms of biological role, involved in mRNA degradation. Hydrolyzes single-stranded polyribonucleotides processively in the 3' to 5' direction. This Haemophilus influenzae (strain 86-028NP) protein is Exoribonuclease 2.